Reading from the N-terminus, the 683-residue chain is Long-chain fatty acid transport protein 3 (683 aa).

The helical transmembrane segment at 3–23 (ALLLLPLLLLLPLLLLKLHLW) threads the bilayer. The segment covering 119-128 (GGDSGEGSAG) has biased composition (gly residues). The interval 119-145 (GGDSGEGSAGEGERAAPGAGDAAAGSG) is disordered. A compositionally biased stretch (low complexity) spans 133–145 (AAPGAGDAAAGSG). ATP-binding positions include 288-292 (TSGTT), His-331, Thr-428, Asp-528, Arg-543, and Lys-635.

It belongs to the ATP-dependent AMP-binding enzyme family. Expressed in bronchial and bronchiolar epithelial cells (at protein level).

The protein resides in the mitochondrion membrane. The enzyme catalyses a fatty acid(in) = a fatty acid(out). It carries out the reaction a long-chain fatty acid + ATP + CoA = a long-chain fatty acyl-CoA + AMP + diphosphate. The catalysed reaction is hexadecanoate + ATP + CoA = hexadecanoyl-CoA + AMP + diphosphate. It catalyses the reaction (9Z)-octadecenoate + ATP + CoA = (9Z)-octadecenoyl-CoA + AMP + diphosphate. The enzyme catalyses (9Z,12Z)-octadecadienoate + ATP + CoA = (9Z,12Z)-octadecadienoyl-CoA + AMP + diphosphate. It carries out the reaction (5Z,8Z,11Z,14Z)-eicosatetraenoate + ATP + CoA = (5Z,8Z,11Z,14Z)-eicosatetraenoyl-CoA + AMP + diphosphate. The catalysed reaction is a very long-chain fatty acid + ATP + CoA = a very long-chain fatty acyl-CoA + AMP + diphosphate. It catalyses the reaction tetracosanoate + ATP + CoA = tetracosanoyl-CoA + AMP + diphosphate. Functionally, mainly functions as an acyl-CoA ligase catalyzing the ATP-dependent formation of fatty acyl-CoA using LCFA and very-long-chain fatty acids (VLCFA) as substrates. Can mediate the levels of long-chain fatty acids (LCFA) in the cell by facilitating their transport across membranes. This Homo sapiens (Human) protein is Long-chain fatty acid transport protein 3.